The primary structure comprises 287 residues: Large ribosomal subunit protein uL2 (287 aa).

2 stretches are compositionally biased toward basic residues: residues 209-220 and 258-287; these read GRNRWKARRPKV and KTRKKKKQSNKLIVRRRRRSSKRSRGGRQS. The disordered stretch occupies residues 209–287; sequence GRNRWKARRP…SKRSRGGRQS (79 aa).

Belongs to the universal ribosomal protein uL2 family. Part of the 50S ribosomal subunit. Forms a bridge to the 30S subunit in the 70S ribosome.

Its function is as follows. One of the primary rRNA binding proteins. Required for association of the 30S and 50S subunits to form the 70S ribosome, for tRNA binding and peptide bond formation. It has been suggested to have peptidyltransferase activity; this is somewhat controversial. Makes several contacts with the 16S rRNA in the 70S ribosome. This Acaryochloris marina (strain MBIC 11017) protein is Large ribosomal subunit protein uL2.